Here is a 181-residue protein sequence, read N- to C-terminus: U1 small nuclear ribonucleoprotein C (181 aa).

A Matrin-type zinc finger spans residues 2–34 (PKCDYCDVYLTHDSMSVRKAHNSGRNHLRNVVD). Composition is skewed to pro residues over residues 129–143 (PGMPAGMPFPPPGGL) and 150–174 (PIPPPGGFPGMPPPGQGFPGMPPPG). Residues 129–181 (PGMPAGMPFPPPGGLPPNFQFPIPPPGGFPGMPPPGQGFPGMPPPGGNHDERR) are disordered.

This sequence belongs to the U1 small nuclear ribonucleoprotein C family. U1 snRNP is composed of the 7 core Sm proteins B/B', D1, D2, D3, E, F and G that assemble in a heptameric protein ring on the Sm site of the small nuclear RNA to form the core snRNP, and at least 3 U1 snRNP-specific proteins U1-70K, U1-A and U1-C. U1-C interacts with U1 snRNA and the 5' splice-site region of the pre-mRNA.

It is found in the nucleus. In terms of biological role, component of the spliceosomal U1 snRNP, which is essential for recognition of the pre-mRNA 5' splice-site and the subsequent assembly of the spliceosome. U1-C is directly involved in initial 5' splice-site recognition for both constitutive and regulated alternative splicing. The interaction with the 5' splice-site seems to precede base-pairing between the pre-mRNA and the U1 snRNA. Stimulates commitment or early (E) complex formation by stabilizing the base pairing of the 5' end of the U1 snRNA and the 5' splice-site region. This is U1 small nuclear ribonucleoprotein C from Sclerotinia sclerotiorum (strain ATCC 18683 / 1980 / Ss-1) (White mold).